A 312-amino-acid polypeptide reads, in one-letter code: Putative B3 domain-containing protein Os10g0537100 (312 aa).

A DNA-binding region (TF-B3) is located at residues 35 to 153; the sequence is FEKVVTPSDV…RLFIDFRRRR (119 aa). 2 disordered regions span residues 161-182 and 286-312; these read FPPT…HPPL and LLQL…DLGL. Over residues 170 to 180 the composition is skewed to basic residues; the sequence is HSHHHHQRHHP. Residues 286–301 show a composition bias toward low complexity; it reads LLQLPSPSSSTSSSTA.

Its subcellular location is the nucleus. In Oryza sativa subsp. japonica (Rice), this protein is Putative B3 domain-containing protein Os10g0537100.